The following is a 197-amino-acid chain: Small ribosomal subunit protein uS4 (197 aa).

An S4 RNA-binding domain is found at 94-158 (RRLDNVIYRF…LKKYLYDYKN (65 aa)).

The protein belongs to the universal ribosomal protein uS4 family. Part of the 30S ribosomal subunit. Contacts protein S5. The interaction surface between S4 and S5 is involved in control of translational fidelity.

In terms of biological role, one of the primary rRNA binding proteins, it binds directly to 16S rRNA where it nucleates assembly of the body of the 30S subunit. Its function is as follows. With S5 and S12 plays an important role in translational accuracy. The protein is Small ribosomal subunit protein uS4 (rpsD) of Carsonella ruddii (strain PV).